Consider the following 320-residue polypeptide: Dipeptide transport system permease protein DppC (320 aa).

A run of 6 helical transmembrane segments spans residues 56 to 76 (LAMA…IGPF), 121 to 141 (LFVG…YGGV), 154 to 176 (MRII…MVLM), 230 to 252 (LLPN…AIFA), 267 to 287 (FASW…GHWW), and 289 to 309 (LFFP…LGDG). An ABC transmembrane type-1 domain is found at 117–307 (ARISLFVGVM…LTMYAFNVLG (191 aa)).

It belongs to the binding-protein-dependent transport system permease family. OppBC subfamily.

Its subcellular location is the cell membrane. In terms of biological role, probably part of the ABC transporter DppBCDE involved in dipeptide transport. Responsible for the translocation of the substrate across the membrane. This is Dipeptide transport system permease protein DppC (dppC) from Bacillus subtilis (strain 168).